A 342-amino-acid polypeptide reads, in one-letter code: Holliday junction branch migration complex subunit RuvB (342 aa).

The large ATPase domain (RuvB-L) stretch occupies residues 1–181; the sequence is MENRMVTPFD…FGMLCAMEFY (181 aa). Residues leucine 20, arginine 21, glycine 62, lysine 65, threonine 66, threonine 67, 128-130, arginine 171, tyrosine 181, and arginine 218 contribute to the ATP site; that span reads EDY. A Mg(2+)-binding site is contributed by threonine 66. The interval 182 to 252 is small ATPAse domain (RuvB-S); that stretch reads TDEELMEIVV…GAKAALDLLE (71 aa). The head domain (RuvB-H) stretch occupies residues 255-342; it reads KEGLDKIDNK…KDNQVSIFNK (88 aa). Residues arginine 310 and arginine 315 each coordinate DNA.

Belongs to the RuvB family. As to quaternary structure, homohexamer. Forms an RuvA(8)-RuvB(12)-Holliday junction (HJ) complex. HJ DNA is sandwiched between 2 RuvA tetramers; dsDNA enters through RuvA and exits via RuvB. An RuvB hexamer assembles on each DNA strand where it exits the tetramer. Each RuvB hexamer is contacted by two RuvA subunits (via domain III) on 2 adjacent RuvB subunits; this complex drives branch migration. In the full resolvosome a probable DNA-RuvA(4)-RuvB(12)-RuvC(2) complex forms which resolves the HJ.

The protein localises to the cytoplasm. The catalysed reaction is ATP + H2O = ADP + phosphate + H(+). In terms of biological role, the RuvA-RuvB-RuvC complex processes Holliday junction (HJ) DNA during genetic recombination and DNA repair, while the RuvA-RuvB complex plays an important role in the rescue of blocked DNA replication forks via replication fork reversal (RFR). RuvA specifically binds to HJ cruciform DNA, conferring on it an open structure. The RuvB hexamer acts as an ATP-dependent pump, pulling dsDNA into and through the RuvAB complex. RuvB forms 2 homohexamers on either side of HJ DNA bound by 1 or 2 RuvA tetramers; 4 subunits per hexamer contact DNA at a time. Coordinated motions by a converter formed by DNA-disengaged RuvB subunits stimulates ATP hydrolysis and nucleotide exchange. Immobilization of the converter enables RuvB to convert the ATP-contained energy into a lever motion, pulling 2 nucleotides of DNA out of the RuvA tetramer per ATP hydrolyzed, thus driving DNA branch migration. The RuvB motors rotate together with the DNA substrate, which together with the progressing nucleotide cycle form the mechanistic basis for DNA recombination by continuous HJ branch migration. Branch migration allows RuvC to scan DNA until it finds its consensus sequence, where it cleaves and resolves cruciform DNA. This chain is Holliday junction branch migration complex subunit RuvB, found in Clostridium botulinum (strain ATCC 19397 / Type A).